The primary structure comprises 204 residues: Urease accessory protein UreG (204 aa).

12–19 (GPVGSGKT) is a binding site for GTP.

It belongs to the SIMIBI class G3E GTPase family. UreG subfamily. In terms of assembly, homodimer. UreD, UreF and UreG form a complex that acts as a GTP-hydrolysis-dependent molecular chaperone, activating the urease apoprotein by helping to assemble the nickel containing metallocenter of UreC. The UreE protein probably delivers the nickel.

Its subcellular location is the cytoplasm. Functionally, facilitates the functional incorporation of the urease nickel metallocenter. This process requires GTP hydrolysis, probably effectuated by UreG. This is Urease accessory protein UreG from Pseudomonas aeruginosa (strain LESB58).